A 528-amino-acid chain; its full sequence is MAEKVYIYDTTLRDGSQMEGVSFSLEDKIRIAEKLDDFGIHYIEGGWPYANPKDNLFFQKAKKMNFKNAKLTAFGSTRRPNKKVSEDPQVESLIKAETPVVTIFGKSWDLHVTDALKTTLEENLNMIYETVEYLKRYVDEVIFDAEHFFDGYKSNPEYALQVLEAALKGGADWVVLCDTNGGTLPHEIYEITKKVKERFKDANVGIHAHNDSETAVANSLMAVLAGARQVHGTINGIGERTGNANLCSIIPNLQLKLGFDVIPQENLKKLTELANFVAEIINMPLPRNMPYVGESAFAHKGGVHASAVLKNAKTYEHINPELVGNKRKITVSDLAGRSNLVHKLKEFGIEIDPKSPELKKLIDKIKELEKEGYHFEAAEASLELLIKRHFGLVKDYFDFDAYRVLIAKRRDDSLPTSEATVRLSVEGVEEHTASLGNGPISALDRALRKALEEFYPNLKELQLIDYKVRIINESAGTSAKVRVLIESTDGKRKWGTVGVSENVIEASWIALRDSIVYKLMKDEEEGIL.

Residues 5 to 271 (VYIYDTTLRD…IPQENLKKLT (267 aa)) enclose the Pyruvate carboxyltransferase domain.

It belongs to the alpha-IPM synthase/homocitrate synthase family.

The catalysed reaction is pyruvate + acetyl-CoA + H2O = (3R)-citramalate + CoA + H(+). The protein operates within amino-acid biosynthesis; L-isoleucine biosynthesis; 2-oxobutanoate from pyruvate: step 1/3. Its function is as follows. Catalyzes the condensation of pyruvate and acetyl-coenzyme A to form (R)-citramalate. The protein is (R)-citramalate synthase of Aquifex aeolicus (strain VF5).